A 270-amino-acid chain; its full sequence is Glutamate racemase (270 aa).

Substrate is bound by residues 10-11 (DS) and 42-43 (YG). The Proton donor/acceptor role is filled by Cys-74. 75-76 (NT) contributes to the substrate binding site. Catalysis depends on Cys-189, which acts as the Proton donor/acceptor. 190 to 191 (TH) provides a ligand contact to substrate.

Belongs to the aspartate/glutamate racemases family.

The catalysed reaction is L-glutamate = D-glutamate. It functions in the pathway cell wall biogenesis; peptidoglycan biosynthesis. In terms of biological role, provides the (R)-glutamate required for cell wall biosynthesis. This chain is Glutamate racemase, found in Bartonella henselae (strain ATCC 49882 / DSM 28221 / CCUG 30454 / Houston 1) (Rochalimaea henselae).